The chain runs to 311 residues: Phosphoribosylaminoimidazole-succinocarboxamide synthase (311 aa).

It belongs to the SAICAR synthetase family.

It catalyses the reaction 5-amino-1-(5-phospho-D-ribosyl)imidazole-4-carboxylate + L-aspartate + ATP = (2S)-2-[5-amino-1-(5-phospho-beta-D-ribosyl)imidazole-4-carboxamido]succinate + ADP + phosphate + 2 H(+). It participates in purine metabolism; IMP biosynthesis via de novo pathway; 5-amino-1-(5-phospho-D-ribosyl)imidazole-4-carboxamide from 5-amino-1-(5-phospho-D-ribosyl)imidazole-4-carboxylate: step 1/2. The polypeptide is Phosphoribosylaminoimidazole-succinocarboxamide synthase (Azoarcus sp. (strain BH72)).